A 152-amino-acid polypeptide reads, in one-letter code: Leukocyte-associated immunoglobulin-like receptor 2 (152 aa).

The N-terminal stretch at M1–T21 is a signal peptide. The 89-residue stretch at P29–E117 folds into the Ig-like C2-type domain. C49 and C101 are joined by a disulfide. Residues V120 to P152 form a disordered region.

It is found in the secreted. The chain is Leukocyte-associated immunoglobulin-like receptor 2 (LAIR2) from Homo sapiens (Human).